A 137-amino-acid polypeptide reads, in one-letter code: Ribonuclease kappa (137 aa).

2 consecutive transmembrane segments (helical) span residues 52–72 and 104–124; these read ACGIVLSAWGVIMLIMLGIFF and VSYNCFIAAGLYLLLGGFSFC.

It belongs to the RNase K family. As to quaternary structure, interacts with the proton translocation complex V0 of the V-ATPase. Interacts with ATP6AP1. Widely expressed.

The protein resides in the endomembrane system. Its subcellular location is the cytoplasmic vesicle. It localises to the clathrin-coated vesicle membrane. In terms of biological role, endoribonuclease which preferentially cleaves ApU and ApG phosphodiester bonds. Hydrolyzes UpU bonds at a lower rate. Regulates the activity of vacuolar (H+)-ATPase (V-ATPase) which is responsible for acidifying and maintaining the pH of intracellular compartments. Required at an early stage of receptor-mediated endocytosis. Its function is as follows. (Microbial infection) Required at an early stage of both clathrin-mediated and clathrin-independent endocytic uptake of a diverse set of viruses, including dengue, West Nile, Sindbis, Rift Valley Fever, influenza, and human rhinoviruses. The sequence is that of Ribonuclease kappa (RNASEK) from Homo sapiens (Human).